Consider the following 943-residue polypeptide: Tyrosine-protein kinase transmembrane receptor ROR2 (943 aa).

An N-terminal signal peptide occupies residues 1–33 (MARGSALPRRPLLCIPAVWAAAALLLSVSRTSG). Residues 34–403 (EVEVLDPNDP…CSPRDSSKMG (370 aa)) lie on the Extracellular side of the membrane. The Ig-like C2-type domain occupies 55 to 145 (PTLKGYFLNF…VATNGMKTIT (91 aa)). The N-linked (GlcNAc...) asparagine glycan is linked to N70. 9 disulfide bridges follow: C83-C135, C174-C239, C182-C232, C223-C264, C252-C300, C256-C286, C316-C394, C337-C377, and C365-C389. The FZ domain occupies 169-303 (HEDGFCQPYR…SPDAANCMRI (135 aa)). Residue N188 is glycosylated (N-linked (GlcNAc...) asparagine). The Kringle domain occupies 316–394 (CYNGSGMDYR…RMELCDVPSC (79 aa)). N318 carries an N-linked (GlcNAc...) asparagine glycan. A helical membrane pass occupies residues 404-424 (ILYILVPSIAIPLVIACLFFL). The Cytoplasmic portion of the chain corresponds to 425-943 (VCMCRNKQKA…VDEAQVQLEA (519 aa)). S469 and S471 each carry sulfoserine; partial. The region spanning 473–746 (VRFMEELGED…PRFKDIHSRL (274 aa)) is the Protein kinase domain. ATP contacts are provided by residues 479-487 (LGEDRFGKV) and K507. D615 functions as the Proton acceptor in the catalytic mechanism. At Y646 the chain carries Phosphotyrosine; by autocatalysis. Disordered regions lie at residues 757–796 (SSAQTSGASNTTQTSSLSTSPVSNVSNARYVGPKQKAPPF) and 850–931 (QVPP…DCDT). Low complexity-rich tracts occupy residues 765–791 (SNTTQTSSLSTSPVSNVSNARYVGPKQ) and 857–872 (PKPSSHHSGSGSTSTG). R785 carries the asymmetric dimethylarginine modification. Residues 873–883 (YVTTAPSNTSM) show a composition bias toward polar residues.

This sequence belongs to the protein kinase superfamily. Tyr protein kinase family. ROR subfamily. As to quaternary structure, homodimer; promotes osteogenesis. Binds YWHAB. Interacts with WTIP. Interacts with ROR2. Requires Mg(2+) as cofactor.

Its subcellular location is the cell membrane. It carries out the reaction L-tyrosyl-[protein] + ATP = O-phospho-L-tyrosyl-[protein] + ADP + H(+). Functionally, tyrosine-protein kinase receptor which may be involved in the early formation of the chondrocytes. It seems to be required for cartilage and growth plate development. Phosphorylates YWHAB, leading to induction of osteogenesis and bone formation. In contrast, has also been shown to have very little tyrosine kinase activity in vitro. May act as a receptor for wnt ligand WNT5A which may result in the inhibition of WNT3A-mediated signaling. This is Tyrosine-protein kinase transmembrane receptor ROR2 (ROR2) from Homo sapiens (Human).